The primary structure comprises 897 residues: MFGAIIKKIVGSKNERELKRMWPVVEKINGLESQVAGLTDDQLREKTFEFKERIARGESLESLLPEAFAVCREGGKRALGMRHFDVQLIGGMVLHQGKIAEMKTGEGKTLVATLPAYLNALTGRGVHVVTVNDYLARRDSEWMGRLYRFLGLTVGVIVHGIDDDERRAAYAADITYGTNNEFGFDYLRDNMKFALEDYVQRPFFFSIVDEVDSILIDEARTPLIISGPTEDSTDKYYIIDRIIPHLKKGEVKEVEANTLSGKRKVYTGDFTVDEKARSSSLTEEGVAKVEKLLKIDNLYDPRHMEILHHVNQALRAHALFRRDVDYVVKDGEVIIVDEFTGRLMPGRRWSDGLHQAIEAKEGVEIENENQTLATITFQNYFRMYEKLSGMTGTADTEAEEFHKIYKLEVTVIPTNRPLLRPDFPDVIYKTEREKFNAVIEEIKGCHEKGQPTLVGTISIEKSEVLAEILRKQGIPHNVLNAKQHEREAEIVAQAGRKGMVTIATNMAGRGTDILLGGNPEGLAKQWRRANPDAPEEEYEKVLAEYRTLCAREHDEVVALGGLHIIGTERHESRRIDNQLRGRSGRQGDPGSSRFYLSLEDDLLRIFGSERVSKIMDFLKIEEGEAITHGMITKAIENAQKKVEAHNFEIRKHLIEYDDVMNKQREVIYTQRREILAGQDIRRHFTQMMDDTIEEISSFAIEKVSAHEWDWQSIGEGILKTYGFQIDIPPQTMDRLSPESFRTLLKEKVHEAFDAKVAAFGDELMDHLIKVIMLQTIDAQWKDHLLSIDHLKEGIGLRGYGQKDPKQEYKKEAYQLFMDMMARIAAETVEKIFWVQIAHEEDVERMEEEQQKQARKKMVFNLVDEDETSEPSKSKKLAGRNEPCPCGSGKKYKKCCGK.

ATP is bound by residues glutamine 87, 105-109, and aspartate 512; that span reads GEGKT. The disordered stretch occupies residues 846–897; it reads EEEQQKQARKKMVFNLVDEDETSEPSKSKKLAGRNEPCPCGSGKKYKKCCGK. Positions 883, 885, 894, and 895 each coordinate Zn(2+).

The protein belongs to the SecA family. As to quaternary structure, monomer and homodimer. Part of the essential Sec protein translocation apparatus which comprises SecA, SecYEG and auxiliary proteins SecDF-YajC and YidC. Zn(2+) is required as a cofactor.

It localises to the cell inner membrane. The protein localises to the cytoplasm. It carries out the reaction ATP + H2O + cellular proteinSide 1 = ADP + phosphate + cellular proteinSide 2.. Its function is as follows. Part of the Sec protein translocase complex. Interacts with the SecYEG preprotein conducting channel. Has a central role in coupling the hydrolysis of ATP to the transfer of proteins into and across the cell membrane, serving as an ATP-driven molecular motor driving the stepwise translocation of polypeptide chains across the membrane. The chain is Protein translocase subunit SecA from Geobacter sulfurreducens (strain ATCC 51573 / DSM 12127 / PCA).